A 103-amino-acid chain; its full sequence is Large ribosomal subunit protein bL21 (103 aa).

This sequence belongs to the bacterial ribosomal protein bL21 family. As to quaternary structure, part of the 50S ribosomal subunit. Contacts protein L20.

Its function is as follows. This protein binds to 23S rRNA in the presence of protein L20. The chain is Large ribosomal subunit protein bL21 from Desulfitobacterium hafniense (strain DSM 10664 / DCB-2).